We begin with the raw amino-acid sequence, 359 residues long: Fructose-bisphosphate aldolase class 2 (359 aa).

S50 lines the D-glyceraldehyde 3-phosphate pocket. D83 acts as the Proton donor in catalysis. Residues H84, D105, E142, and H198 each coordinate Zn(2+). G199 is a binding site for dihydroxyacetone phosphate. Zn(2+) is bound at residue H232. Dihydroxyacetone phosphate contacts are provided by residues 233–235 (GSS) and 275–278 (NIDT).

This sequence belongs to the class II fructose-bisphosphate aldolase family. Zn(2+) is required as a cofactor.

The enzyme catalyses beta-D-fructose 1,6-bisphosphate = D-glyceraldehyde 3-phosphate + dihydroxyacetone phosphate. It participates in carbohydrate degradation; glycolysis; D-glyceraldehyde 3-phosphate and glycerone phosphate from D-glucose: step 4/4. Catalyzes the aldol condensation of dihydroxyacetone phosphate (DHAP or glycerone-phosphate) with glyceraldehyde 3-phosphate (G3P) to form fructose 1,6-bisphosphate (FBP) in gluconeogenesis and the reverse reaction in glycolysis. In Synechocystis sp. (strain ATCC 27184 / PCC 6803 / Kazusa), this protein is Fructose-bisphosphate aldolase class 2 (fbaA).